Reading from the N-terminus, the 301-residue chain is Polyamine aminopropyltransferase (301 aa).

The PABS domain occupies 4 to 240; sequence WHWLLEWQTP…GLWGFVYGGV (237 aa). Q33 serves as a coordination point for S-methyl-5'-thioadenosine. The spermidine site is built by H64 and E89. S-methyl-5'-thioadenosine is bound by residues D109 and 141–142; that span reads DG. D159 functions as the Proton acceptor in the catalytic mechanism.

Belongs to the spermidine/spermine synthase family. As to quaternary structure, homodimer or homotetramer.

It localises to the cytoplasm. The enzyme catalyses S-adenosyl 3-(methylsulfanyl)propylamine + putrescine = S-methyl-5'-thioadenosine + spermidine + H(+). Its pathway is amine and polyamine biosynthesis; spermidine biosynthesis; spermidine from putrescine: step 1/1. In terms of biological role, catalyzes the irreversible transfer of a propylamine group from the amino donor S-adenosylmethioninamine (decarboxy-AdoMet) to putrescine (1,4-diaminobutane) to yield spermidine. The sequence is that of Polyamine aminopropyltransferase from Saccharolobus islandicus (strain Y.N.15.51 / Yellowstone #2) (Sulfolobus islandicus).